Reading from the N-terminus, the 357-residue chain is Dehydrogenase FUB6 (357 aa).

A compositionally biased stretch (polar residues) spans 1–17 (MGGEVSNKTWVFKQSPS). The disordered stretch occupies residues 1 to 22 (MGGEVSNKTWVFKQSPSGLPEP).

It belongs to the zinc-containing alcohol dehydrogenase family. Quinone oxidoreductase subfamily.

Its pathway is mycotoxin biosynthesis. Dehydrogenase; part of the gene cluster that mediates the biosynthesis of fusaric acid, a mycotoxin with low to moderate toxicity to animals and humans, but with high phytotoxic properties. L-aspartate is suggested as fusaric acid amino acid precursor that is activated and further processed to O-acetyl-L-homoserine by cluster enzymes aspartate kinase FUB3 and homoserine O-acetyltransferase FUB5, as well as enzymes of the primary metabolism. The polyketide synthase (PKS) FUB1 generates the triketide trans-2-hexenal which is presumptively released by the hydrolase FUB4 and linked to the NRPS-bound amino acid precursor by NAD(P)-dependent dehydrogenase FUB6. FUB1, FUB4, and the non-canonical NRPS Fub8 may form an enzyme complex. Further processing of the NRPS-bound intermediate might be carried out by FUB6 and the O-acetylhomoserine FUB7, enabling a spontaneous electrocyclization to close the carbon backbone of fusaric acid. Dihydrofusaric acid is likely to be released via reduction by the thioester reductase (TR) domain of FUB8 whereupon the final oxidation to fusaric acid may (also) be performed by the FMN-dependent dehydrogenase FUB9. This chain is Dehydrogenase FUB6, found in Fusarium oxysporum f. sp. lycopersici (strain 4287 / CBS 123668 / FGSC 9935 / NRRL 34936) (Fusarium vascular wilt of tomato).